The primary structure comprises 159 residues: Protein E6 (159 aa).

Zinc fingers lie at residues 35-71 (CVYC…CGKC) and 108-144 (CYIC…CMQC).

Belongs to the papillomaviridae E6 protein family. In terms of assembly, forms homodimers. Interacts with ubiquitin-protein ligase UBE3A/E6-AP; this interaction stimulates UBE3A ubiquitin activity. Interacts with host TP53 and EP300; this interaction inhibits TP53 activity.

The protein localises to the host cytoplasm. The protein resides in the host nucleus. Its function is as follows. Plays a major role in the induction and maintenance of cellular transformation. E6 associates with host UBE3A/E6-AP ubiquitin-protein ligase and modulates its activity. Sequesters tumor suppressor TP53 in the host cytoplasm and modulates its activity by interacting with host EP300 that results in the reduction of TP53 acetylation and activation. In turn, apoptosis induced by DNA damage is inhibited. E6 also protects host keratinocytes from apoptosis by mediating the degradation of host BAK1. May also inhibit host immune response. The polypeptide is Protein E6 (Homo sapiens (Human)).